We begin with the raw amino-acid sequence, 156 residues long: Putative pre-16S rRNA nuclease (156 aa).

This sequence belongs to the YqgF nuclease family.

Its subcellular location is the cytoplasm. Its function is as follows. Could be a nuclease involved in processing of the 5'-end of pre-16S rRNA. This is Putative pre-16S rRNA nuclease from Ehrlichia canis (strain Jake).